The primary structure comprises 139 residues: Small ribosomal subunit protein eS6 (139 aa).

It belongs to the eukaryotic ribosomal protein eS6 family.

The protein is Small ribosomal subunit protein eS6 of Methanosarcina barkeri (strain Fusaro / DSM 804).